The chain runs to 216 residues: Probable GTP-binding protein EngB (216 aa).

The EngB-type G domain maps to 26-200; it reads EGIEIAFAGR…RAKLDTWFAP (175 aa). GTP-binding positions include 34-41, 61-65, 79-82, 146-149, and 179-181; these read GRSNAGKS, GRTQL, DLPG, TKAD, and YSS. 2 residues coordinate Mg(2+): serine 41 and threonine 63.

Belongs to the TRAFAC class TrmE-Era-EngA-EngB-Septin-like GTPase superfamily. EngB GTPase family. Mg(2+) serves as cofactor.

Its function is as follows. Necessary for normal cell division and for the maintenance of normal septation. This is Probable GTP-binding protein EngB from Vibrio vulnificus (strain YJ016).